The following is a 511-amino-acid chain: UDP-N-acetylmuramate--L-alanine ligase (511 aa).

127–133 is a binding site for ATP; the sequence is GTHGKTT. Residues 481 to 511 are disordered; the sequence is VGTVPGGEVGGATTIGGTVPGGSAPGASAAG. Positions 484-504 are enriched in gly residues; sequence VPGGEVGGATTIGGTVPGGSA.

The protein belongs to the MurCDEF family.

The protein resides in the cytoplasm. It carries out the reaction UDP-N-acetyl-alpha-D-muramate + L-alanine + ATP = UDP-N-acetyl-alpha-D-muramoyl-L-alanine + ADP + phosphate + H(+). Its pathway is cell wall biogenesis; peptidoglycan biosynthesis. In terms of biological role, cell wall formation. This chain is UDP-N-acetylmuramate--L-alanine ligase, found in Salinispora arenicola (strain CNS-205).